Here is a 195-residue protein sequence, read N- to C-terminus: uncharacterized protein (195 aa).

A compositionally biased stretch (polar residues) spans 1 to 11; sequence MDYIVSPTSSE. Residues 1 to 118 form a disordered region; the sequence is MDYIVSPTSS…LDTEGGFVLS (118 aa). A compositionally biased stretch (acidic residues) spans 35-46; it reads SPEDITDSDEQN. Residues 47–63 show a composition bias toward low complexity; it reads DTTTTTSEMSSTSSVPS. Basic and acidic residues predominate over residues 82-93; the sequence is SDSKLIFDSDNK. Residues 94-110 show a composition bias toward acidic residues; it reads DQDDEDDEDDEELEGLD.

This is an uncharacterized protein from Acanthamoeba polyphaga mimivirus (APMV).